Here is a 32-residue protein sequence, read N- to C-terminus: Cytochrome b6-f complex subunit 6 (32 aa).

The chain crosses the membrane as a helical span at residues 6–26; it reads VFYIVFIALFFGIAVGIIFAI.

Belongs to the PetL family. The 4 large subunits of the cytochrome b6-f complex are cytochrome b6, subunit IV (17 kDa polypeptide, PetD), cytochrome f and the Rieske protein, while the 4 small subunits are PetG, PetL, PetM and PetN. The complex functions as a dimer.

It localises to the cellular thylakoid membrane. In terms of biological role, component of the cytochrome b6-f complex, which mediates electron transfer between photosystem II (PSII) and photosystem I (PSI), cyclic electron flow around PSI, and state transitions. PetL is important for photoautotrophic growth as well as for electron transfer efficiency and stability of the cytochrome b6-f complex. This Mastigocladus laminosus (Fischerella sp.) protein is Cytochrome b6-f complex subunit 6.